The sequence spans 69 residues: Photosystem I reaction center subunit IV (69 aa).

The protein belongs to the PsaE family.

The protein localises to the cellular thylakoid membrane. In terms of biological role, stabilizes the interaction between PsaC and the PSI core, assists the docking of the ferredoxin to PSI and interacts with ferredoxin-NADP oxidoreductase. This chain is Photosystem I reaction center subunit IV, found in Prochlorococcus marinus (strain MIT 9515).